A 447-amino-acid chain; its full sequence is UPF0210 protein Lreu_0940 (447 aa).

Belongs to the UPF0210 family. Homodimer.

This chain is UPF0210 protein Lreu_0940, found in Limosilactobacillus reuteri (strain DSM 20016) (Lactobacillus reuteri).